A 407-amino-acid polypeptide reads, in one-letter code: Protein RecA (407 aa).

79–86 lines the ATP pocket; it reads GPESSGKT. Residues 358–407 form a disordered region; that stretch reads LSLEASPEESDAKTLRRXASRGAGASSSRVQEGSAANDHFQDESTTAKLL. A compositionally biased stretch (low complexity) spans 377–386; sequence SRGAGASSSR.

The protein belongs to the RecA family.

It is found in the cytoplasm. In terms of biological role, can catalyze the hydrolysis of ATP in the presence of single-stranded DNA, the ATP-dependent uptake of single-stranded DNA by duplex DNA, and the ATP-dependent hybridization of homologous single-stranded DNAs. It interacts with LexA causing its activation and leading to its autocatalytic cleavage. In Treponema pallidum (strain Nichols), this protein is Protein RecA.